Here is a 301-residue protein sequence, read N- to C-terminus: 33 kDa chaperonin (301 aa).

Cystine bridges form between cysteine 239-cysteine 241 and cysteine 272-cysteine 275.

Belongs to the HSP33 family. Post-translationally, under oxidizing conditions two disulfide bonds are formed involving the reactive cysteines. Under reducing conditions zinc is bound to the reactive cysteines and the protein is inactive.

It is found in the cytoplasm. Redox regulated molecular chaperone. Protects both thermally unfolding and oxidatively damaged proteins from irreversible aggregation. Plays an important role in the bacterial defense system toward oxidative stress. The chain is 33 kDa chaperonin from Nostoc punctiforme (strain ATCC 29133 / PCC 73102).